The chain runs to 350 residues: Probable poly-beta-1,6-N-acetyl-D-glucosamine export protein (350 aa).

Helical transmembrane passes span 8–28 (LVYL…LTQI), 40–60 (LVLQ…FIIL), 83–103 (YILI…SLLT), 119–139 (QWYG…YIIF), 146–166 (FNSK…LYYF), 182–202 (LSEN…AYMG), 216–236 (LVIM…LANG), 254–274 (IMFI…FNTI), 276–296 (MISA…DSLF), and 308–328 (VFLA…GMIL).

It belongs to the acyltransferase 3 family.

It is found in the cell membrane. Functionally, presumably involved in the export of the biofilm adhesin polysaccharide poly-beta-1,6-N-acetyl-D-glucosamine (PNAG, also referred to as PIA) across the cell membrane. This is Probable poly-beta-1,6-N-acetyl-D-glucosamine export protein (icaC) from Staphylococcus aureus (strain NCTC 8325 / PS 47).